Here is an 885-residue protein sequence, read N- to C-terminus: DNA mismatch repair protein MutS (885 aa).

The segment at 1–67 is disordered; that stretch reads MAPGEQQLSL…SNNDDEGLPR (67 aa). The span at 26–36 shows a compositional bias: basic and acidic residues; the sequence is SEDKTEESERP. An ATP-binding site is contributed by 691–698; sequence GPNASGKS.

This sequence belongs to the DNA mismatch repair MutS family.

Its function is as follows. This protein is involved in the repair of mismatches in DNA. It is possible that it carries out the mismatch recognition step. This protein has a weak ATPase activity. The sequence is that of DNA mismatch repair protein MutS from Synechococcus sp. (strain RCC307).